The following is a 277-amino-acid chain: Inositol monophosphatase 1 (277 aa).

Mg(2+)-binding residues include Glu70, Asp90, Ile92, and Asp93. Glu70 is a substrate binding site. 92-95 lines the substrate pocket; that stretch reads IDGT. Thr168 is modified (phosphothreonine). Residues 194 to 196, Glu213, and Asp220 contribute to the substrate site; that span reads GTA. Residue Asp220 coordinates Mg(2+).

The protein belongs to the inositol monophosphatase superfamily. In terms of assembly, homodimer. Mg(2+) is required as a cofactor.

The protein localises to the cytoplasm. It catalyses the reaction a myo-inositol phosphate + H2O = myo-inositol + phosphate. The catalysed reaction is 1D-myo-inositol 1-phosphate + H2O = myo-inositol + phosphate. The enzyme catalyses 1D-myo-inositol 2-phosphate + H2O = myo-inositol + phosphate. It carries out the reaction 1D-myo-inositol 3-phosphate + H2O = myo-inositol + phosphate. It catalyses the reaction 1D-myo-inositol 4-phosphate + H2O = myo-inositol + phosphate. The catalysed reaction is 1D-myo-inositol 5-phosphate + H2O = myo-inositol + phosphate. The enzyme catalyses 1D-myo-inositol 6-phosphate + H2O = myo-inositol + phosphate. It carries out the reaction scyllo-inositol 1-phosphate + H2O = scyllo-inositol + phosphate. It catalyses the reaction alpha-D-galactose 1-phosphate + H2O = D-galactose + phosphate. The catalysed reaction is alpha-D-glucose 1-phosphate + H2O = D-glucose + phosphate. The enzyme catalyses D-glucose 6-phosphate + H2O = D-glucose + phosphate. It carries out the reaction beta-D-fructose 1-phosphate + H2O = D-fructose + phosphate. It catalyses the reaction glycerol 2-phosphate + H2O = glycerol + phosphate. The catalysed reaction is adenosine 2'-phosphate + H2O = adenosine + phosphate. Its pathway is polyol metabolism; myo-inositol biosynthesis; myo-inositol from D-glucose 6-phosphate: step 2/2. With respect to regulation, inhibited by Li(+), Ca(2+) and Mn(2+), but also by Mg(2+) at concentrations above 3 mM. Phosphatase involved in the dephosphorylation of myo-inositol monophosphate to generate myo-inositol. Is also able to dephosphorylate scyllo-inositol-phosphate, myo-inositol 1,4-diphosphate, scyllo-inositol-1,3-diphosphate and scyllo-inositol-1,4-diphosphate. Also dephosphorylates in vitro other sugar-phosphates including D-galactose-1-phosphate, glucose-1-phosphate, glucose-6-phosphate, fructose-1-phosphate, beta-glycerophosphate and 2'-AMP. Responsible for the provision of inositol required for synthesis of phosphatidylinositol and polyphosphoinositides, and involved in maintaining normal brain function. Has been implicated as the pharmacological target for lithium Li(+) action in brain. The chain is Inositol monophosphatase 1 (IMPA1) from Pongo abelii (Sumatran orangutan).